The primary structure comprises 92 residues: MMKVIPLGERLLIKPIKEEKKTEGGIVLPDSAKEKPMKAEVVAVGKIEDEEKFDIKVGDKVIFSKYAGTEIKIDDEDYIIIDVNDILAKIEE.

It belongs to the GroES chaperonin family. As to quaternary structure, heptamer of 7 subunits arranged in a ring. Interacts with the chaperonin GroEL.

The protein localises to the cytoplasm. Its function is as follows. Together with the chaperonin GroEL, plays an essential role in assisting protein folding. The GroEL-GroES system forms a nano-cage that allows encapsulation of the non-native substrate proteins and provides a physical environment optimized to promote and accelerate protein folding. GroES binds to the apical surface of the GroEL ring, thereby capping the opening of the GroEL channel. This Thermotoga neapolitana protein is Co-chaperonin GroES.